A 355-amino-acid polypeptide reads, in one-letter code: Tetraacyldisaccharide 4'-kinase (355 aa).

48–55 (SVGGTGKT) serves as a coordination point for ATP.

Belongs to the LpxK family.

The enzyme catalyses a lipid A disaccharide + ATP = a lipid IVA + ADP + H(+). The protein operates within glycolipid biosynthesis; lipid IV(A) biosynthesis; lipid IV(A) from (3R)-3-hydroxytetradecanoyl-[acyl-carrier-protein] and UDP-N-acetyl-alpha-D-glucosamine: step 6/6. Transfers the gamma-phosphate of ATP to the 4'-position of a tetraacyldisaccharide 1-phosphate intermediate (termed DS-1-P) to form tetraacyldisaccharide 1,4'-bis-phosphate (lipid IVA). In Pelodictyon phaeoclathratiforme (strain DSM 5477 / BU-1), this protein is Tetraacyldisaccharide 4'-kinase.